The sequence spans 688 residues: Zinc finger CCCH domain-containing protein 22 (688 aa).

The segment at 62 to 123 (ALLPPPPPPS…QPFSRSNGSV (62 aa)) is disordered. The span at 101–117 (PLSASSPSSWAQAQPFS) shows a compositional bias: low complexity. A C3H1-type zinc finger spans residues 233–260 (GFGWKPCLYYARGFCKNGSSCRFVHGDD). The RRM domain occupies 366–442 (RQIYLTFPAD…RVLVKPYKEK (77 aa)). Residues 487 to 522 (TNEMMLRRKLEEQQQAAELQQAIELHSRRLMDLQLL) adopt a coiled-coil conformation. The tract at residues 552-624 (LATTMVESPP…PTKSSVSAHQ (73 aa)) is disordered. A compositionally biased stretch (basic and acidic residues) spans 574–589 (TEERKMVNGGGDKEES). Over residues 613–624 (ASPTKSSVSAHQ) the composition is skewed to polar residues.

The sequence is that of Zinc finger CCCH domain-containing protein 22 from Oryza sativa subsp. japonica (Rice).